Here is a 429-residue protein sequence, read N- to C-terminus: Histidinol dehydrogenase (429 aa).

Residues Tyr-127, Gln-188, and Asn-211 each coordinate NAD(+). Substrate-binding residues include Ser-234, Gln-256, and His-259. Zn(2+) contacts are provided by Gln-256 and His-259. Residues Glu-324 and His-325 each act as proton acceptor in the active site. His-325, Asp-358, Glu-412, and His-417 together coordinate substrate. Residue Asp-358 participates in Zn(2+) binding. Residue His-417 participates in Zn(2+) binding.

Belongs to the histidinol dehydrogenase family. It depends on Zn(2+) as a cofactor.

The enzyme catalyses L-histidinol + 2 NAD(+) + H2O = L-histidine + 2 NADH + 3 H(+). It functions in the pathway amino-acid biosynthesis; L-histidine biosynthesis; L-histidine from 5-phospho-alpha-D-ribose 1-diphosphate: step 9/9. Catalyzes the sequential NAD-dependent oxidations of L-histidinol to L-histidinaldehyde and then to L-histidine. This is Histidinol dehydrogenase from Bacillus anthracis.